A 126-amino-acid polypeptide reads, in one-letter code: Histone H2B 5 (126 aa).

The segment covering 1 to 12 has biased composition (low complexity); that stretch reads MPEPAKSAPAPK. Residues 1–35 are disordered; the sequence is MPEPAKSAPAPKKGSKKAVTKTQKKGDKKRRKSRK. Residues K6 and K13 each carry the N6-acetyllysine modification. Basic residues predominate over residues 13-34; it reads KGSKKAVTKTQKKGDKKRRKSR. Residue S15 is modified to Phosphoserine. K16 and K21 each carry N6-acetyllysine. S113 carries an O-linked (GlcNAc) serine glycan. A Glycyl lysine isopeptide (Lys-Gly) (interchain with G-Cter in ubiquitin) cross-link involves residue K121.

Belongs to the histone H2B family. In terms of assembly, the nucleosome is a histone octamer containing two molecules each of H2A, H2B, H3 and H4 assembled in one H3-H4 heterotetramer and two H2A-H2B heterodimers. The octamer wraps approximately 147 bp of DNA. In terms of processing, monoubiquitination of Lys-121 by the BRE1 gives a specific tag for epigenetic transcriptional activation and is also prerequisite for histone H3 'Lys-4' and 'Lys-79' methylation. Phosphorylated on Ser-15 during apoptosis; which facilitates apoptotic chromatin condensation. Post-translationally, glcNAcylation at Ser-113 promotes monoubiquitination of Lys-121. It fluctuates in response to extracellular glucose, and associates with transcribed genes.

The protein resides in the nucleus. It localises to the chromosome. In terms of biological role, core component of nucleosome. Nucleosomes wrap and compact DNA into chromatin, limiting DNA accessibility to the cellular machineries which require DNA as a template. Histones thereby play a central role in transcription regulation, DNA repair, DNA replication and chromosomal stability. DNA accessibility is regulated via a complex set of post-translational modifications of histones, also called histone code, and nucleosome remodeling. The polypeptide is Histone H2B 5 (H2B-V) (Gallus gallus (Chicken)).